The following is a 90-amino-acid chain: Probable Fe(2+)-trafficking protein (90 aa).

Belongs to the Fe(2+)-trafficking protein family.

In terms of biological role, could be a mediator in iron transactions between iron acquisition and iron-requiring processes, such as synthesis and/or repair of Fe-S clusters in biosynthetic enzymes. This chain is Probable Fe(2+)-trafficking protein, found in Saccharophagus degradans (strain 2-40 / ATCC 43961 / DSM 17024).